The following is a 219-amino-acid chain: ATP-dependent Clp protease proteolytic subunit (219 aa).

The tract at residues 1-22 (MPVGVPKVPFLNPNPDPEPDSV) is disordered. Serine 116 acts as the Nucleophile in catalysis. Residue histidine 141 is part of the active site.

Belongs to the peptidase S14 family. Component of the chloroplastic Clp protease core complex.

It is found in the plastid. Its subcellular location is the chloroplast stroma. The catalysed reaction is Hydrolysis of proteins to small peptides in the presence of ATP and magnesium. alpha-casein is the usual test substrate. In the absence of ATP, only oligopeptides shorter than five residues are hydrolyzed (such as succinyl-Leu-Tyr-|-NHMec, and Leu-Tyr-Leu-|-Tyr-Trp, in which cleavage of the -Tyr-|-Leu- and -Tyr-|-Trp bonds also occurs).. Cleaves peptides in various proteins in a process that requires ATP hydrolysis. Has a chymotrypsin-like activity. Plays a major role in the degradation of misfolded proteins. This is ATP-dependent Clp protease proteolytic subunit from Pelargonium hortorum (Common geranium).